A 298-amino-acid polypeptide reads, in one-letter code: Dioxygenase aneA (298 aa).

Positions 134, 136, and 213 each coordinate Fe cation.

It belongs to the PhyH family. Homodimer. Fe cation serves as cofactor.

It carries out the reaction aculene D + 2-oxoglutarate + O2 = aculene C + succinate + CO2 + H2O. The enzyme catalyses aculene B + 2-oxoglutarate + O2 = aculene A + succinate + CO2 + H2O. It participates in secondary metabolite biosynthesis. Functionally, dioxygenase; part of the gene cluster that mediates the biosynthesis of aculenes, a unique type of norsesquiterpenes that contain a nordaucane skeleton linked to an L-proline moiety and are of mixed biosynthetic origin. The pathway begins with the synthesis of dauca-4,7-diene by the terpene cyclase aneC using farnesyl pyrophosphate (FPP) as substrate. The cytochrome P450 monooxygenase aneF then performs the initial oxidation at C-12 of dauca-4,7-diene to yield asperaculane D. Asperaculane D is substrate of the cytochrome P450 monooxygenase aneD for C-10 hydroxylation to yield asperaculane E. The cytochrome P450 monooxygenase aneG then converts asperaculane E into aculene D via C-2 oxidation. The monomodular nonribosomal peptide synthase aneB adenylates L-proline and the thiohydrolase aneE transfers this activated L-proline derivative to aculenes D and C to produce respectively aculenes B and A. The dioxygenase aneA converts aculene D into aculene C, and aculene B into aculene A by introducing the 5,6-alkene moiety. Asperculanes A, B, C and F, as well as 14-prolyl asperculane C, might be shunt products of the pathway. This chain is Dioxygenase aneA, found in Aspergillus aculeatus (strain ATCC 16872 / CBS 172.66 / WB 5094).